We begin with the raw amino-acid sequence, 294 residues long: Cytidine deaminase (294 aa).

CMP/dCMP-type deaminase domains follow at residues 48–168 (DDDA…FGPK) and 187–294 (ALTD…RITF). Residue 89-91 (NME) coordinates substrate. H102 lines the Zn(2+) pocket. E104 functions as the Proton donor in the catalytic mechanism. Zn(2+)-binding residues include C129 and C132.

The protein belongs to the cytidine and deoxycytidylate deaminase family. As to quaternary structure, homodimer. Zn(2+) serves as cofactor.

It carries out the reaction cytidine + H2O + H(+) = uridine + NH4(+). The catalysed reaction is 2'-deoxycytidine + H2O + H(+) = 2'-deoxyuridine + NH4(+). This enzyme scavenges exogenous and endogenous cytidine and 2'-deoxycytidine for UMP synthesis. The polypeptide is Cytidine deaminase (Serratia proteamaculans (strain 568)).